The sequence spans 428 residues: MFFTCGPNEAMVVSGFCRSPPVMVAGGRVFVLPCIQQIQRISLNTLTLNVKSEKVYTRHGVPISVTGIAQVKIQGQNKEMLAAACQMFLGKTEAEIAHIALETLEGHQRAIMAHMTVEEIYKDRQKFSEQVFKVASSDLVNMGISVVSYTLKDIHDDQDYLHSLGKARTAQVQKDARIGEAEAKRDAGIREAKAKQEKVSAQCLSEIEMAKAQRDYELKKATYDIEVNTRRAQADLAYQLQVAKTKQQIEEQRVQVQVVERAQQVAVQEQEIARREKELEARVRKPAEAERYRLERLAEAEKAQLIMQAEAEAESVRMRGEAEAFAIGARARAEAEQMAKKAEAFQMYQEAAQLDMLLEKLPQVAEEISGPLTSANKITLVSSGSGTMGAAKVTGEVLDILSRLPESVERLTGVSISQVNHNKPLRTA.

A phosphoserine mark is found at serine 19, serine 163, and serine 385. Residue threonine 387 is modified to Phosphothreonine.

The protein belongs to the band 7/mec-2 family. Flotillin subfamily. Heterooligomeric complex of flotillin-1 and flotillin-2 and caveolin-1 and caveolin-2. Interacts with ECPAS. As to expression, high expression in brain, white adipose tissue, heart muscle, skeletal muscle and lung. Low expression in spleen, liver and testis.

It localises to the cell membrane. It is found in the endosome. The protein localises to the membrane. Its subcellular location is the caveola. The protein resides in the melanosome. It localises to the membrane raft. In terms of biological role, may act as a scaffolding protein within caveolar membranes, functionally participating in formation of caveolae or caveolae-like vesicles. The polypeptide is Flotillin-1 (Flot1) (Mus musculus (Mouse)).